Here is an 84-residue protein sequence, read N- to C-terminus: uncharacterized protein (84 aa).

This is an uncharacterized protein from Micrococcus luteus (Micrococcus lysodeikticus).